The sequence spans 314 residues: L-lactate dehydrogenase 2 (314 aa).

Residues Val-16, Asp-37, Lys-42, Tyr-68, and 82–83 (GV) each bind NAD(+). Substrate-binding residues include Gln-85 and Arg-91. NAD(+)-binding positions include Ser-104, 121 to 123 (ASN), and Thr-146. 123-126 (NPVD) is a substrate binding site. Substrate is bound at residue 151–154 (DTTR). Residues Arg-156 and His-171 each contribute to the beta-D-fructose 1,6-bisphosphate site. His-178 (proton acceptor) is an active-site residue. Tyr-223 carries the phosphotyrosine modification. Thr-232 contacts substrate.

The protein belongs to the LDH/MDH superfamily. LDH family. Homotetramer.

It localises to the cytoplasm. The catalysed reaction is (S)-lactate + NAD(+) = pyruvate + NADH + H(+). The protein operates within fermentation; pyruvate fermentation to lactate; (S)-lactate from pyruvate: step 1/1. Its activity is regulated as follows. Allosterically activated by fructose 1,6-bisphosphate (FBP). Functionally, catalyzes the conversion of lactate to pyruvate. The protein is L-lactate dehydrogenase 2 of Lactococcus lactis subsp. lactis (strain IL1403) (Streptococcus lactis).